We begin with the raw amino-acid sequence, 325 residues long: Glutaminase (325 aa).

Serine 76, asparagine 125, glutamate 169, asparagine 176, tyrosine 200, tyrosine 252, and valine 270 together coordinate substrate.

Belongs to the glutaminase family. In terms of assembly, homotetramer.

It carries out the reaction L-glutamine + H2O = L-glutamate + NH4(+). The polypeptide is Glutaminase (Clavibacter michiganensis subsp. michiganensis (strain NCPPB 382)).